The chain runs to 155 residues: Transcriptional repressor NrdR (155 aa).

Polar residues predominate over residues 1–11; sequence MECPNCHQNAS. The tract at residues 1–22 is disordered; it reads MECPNCHQNASRVIDSRPSDEN. A zinc finger spans residues 3-34; that stretch reads CPNCHQNASRVIDSRPSDENRAIRRRRECENC. An ATP-cone domain is found at 49 to 139; sequence LLVIKNDGTR…IYREFKDMSS (91 aa).

The protein belongs to the NrdR family. It depends on Zn(2+) as a cofactor.

Its function is as follows. Negatively regulates transcription of bacterial ribonucleotide reductase nrd genes and operons by binding to NrdR-boxes. This is Transcriptional repressor NrdR from Lactobacillus helveticus (strain DPC 4571).